The chain runs to 421 residues: MASSSVPPATAPAAAGGPGPGFGFASKTKKKHFVQQKVKVFRAADPLVGVFLWGVAHSINELSQVPPPVMLLPDDFKASSKIKVNNHFFHRENLPSHFKFKEYCPQVFRNLRDRFAIDDHDYLVSLTRSPPSETEGSDGRFLISYDRTLVIKEVSSEDIADMHSNLSNYHQYIVKCHGNTLLPQFLGMYRVSVENEDSYMLVMRNMFSHRLPVHRKYDLKGSLVSREASDKEKVKELPTLKDMDFLNKNQKVYIGEEEKKVFLEKLKRDVEFLVQLKIMDYSLLLGIHDIIRGSEPEEEGPVREEESEWDGDCNLAGPPALVGSYGTSPEGIGGYIHSHRPLGPGEFESFIDVYAIRSAEGAPQKEVYFMGLIDILTQYDAKKKAAHAAKTVKHGAGAEISTVHPEQYAKRFLDFIANIFA.

An N-acetylalanine modification is found at Ala2. Position 26 is a phosphoserine (Ser26). The PIPK domain occupies Ala43 to Phe420. The required for interaction with PIP5K1A stretch occupies residues Val69–Asp75. Ser349 carries the post-translational modification Phosphoserine.

In terms of assembly, interacts with PIP5K1A; the interaction inhibits PIP5K1A kinase activity. Post-translationally, phosphorylated, phosphorylation is induced by EGF.

The protein resides in the endoplasmic reticulum. It is found in the cytoplasm. The catalysed reaction is a 1,2-diacyl-sn-glycero-3-phospho-(1D-myo-inositol-5-phosphate) + ATP = a 1,2-diacyl-sn-glycero-3-phospho-(1D-myo-inositol-4,5-bisphosphate) + ADP + H(+). It catalyses the reaction 1,2-dihexadecanoyl-sn-glycero-3-phospho-(1D-myo-inositol-5-phosphate) + ATP = 1,2-dihexadecanoyl-sn-glycero-3-phospho-(1D-myo-inositol-4,5-bisphosphate) + ADP + H(+). The enzyme catalyses 1,2-dihexadecanoyl-sn-glycero-3-phospho-(1D-myo-inositol-5-phosphate) + GTP = 1,2-dihexadecanoyl-sn-glycero-3-phospho-(1D-myo-inositol-4,5-bisphosphate) + GDP + H(+). Functionally, phosphatidylinositol 5-phosphate 4-kinase with low enzymatic activity. May be a GTP sensor, has higher GTP-dependent kinase activity than ATP-dependent kinase activity. PIP4Ks negatively regulate insulin signaling through a catalytic-independent mechanism. They interact with PIP5Ks and suppress PIP5K-mediated PtdIns(4,5)P2 synthesis and insulin-dependent conversion to PtdIns(3,4,5)P3. The polypeptide is Phosphatidylinositol 5-phosphate 4-kinase type-2 gamma (Mus musculus (Mouse)).